Consider the following 360-residue polypeptide: Histidinol-phosphate aminotransferase (360 aa).

K223 is modified (N6-(pyridoxal phosphate)lysine).

The protein belongs to the class-II pyridoxal-phosphate-dependent aminotransferase family. Histidinol-phosphate aminotransferase subfamily. In terms of assembly, homodimer. The cofactor is pyridoxal 5'-phosphate.

The catalysed reaction is L-histidinol phosphate + 2-oxoglutarate = 3-(imidazol-4-yl)-2-oxopropyl phosphate + L-glutamate. The protein operates within amino-acid biosynthesis; L-histidine biosynthesis; L-histidine from 5-phospho-alpha-D-ribose 1-diphosphate: step 7/9. The polypeptide is Histidinol-phosphate aminotransferase (hisC) (Bacillus subtilis (strain 168)).